Here is a 948-residue protein sequence, read N- to C-terminus: Puromycin-sensitive aminopeptidase (948 aa).

Substrate is bound by residues glutamate 206 and 341 to 345 (GAMEN). Histidine 377 is a Zn(2+) binding site. The Proton acceptor role is filled by glutamate 378. Residues histidine 381 and glutamate 400 each contribute to the Zn(2+) site.

The protein belongs to the peptidase M1 family. It depends on Zn(2+) as a cofactor. Expressed mainly in intestinal cells in the posterior part of the intestine and in amphid sensory neurons and nerve ring neurons. Expressed in neurons in the male tail. Expressed in mature spermatids (at protein level).

Its subcellular location is the cytoplasm. The protein localises to the cell cortex. It is found in the chromosome. It localises to the cytoskeleton. The protein resides in the spindle pole. It catalyses the reaction Release of an N-terminal amino acid, preferentially alanine, from a wide range of peptides, amides and arylamides.. Inhibited by chelating agent 1,10-phenanthroline, aminopeptidase inhibitors actinonin, amastatin, and leuhistin, and to a lesser extent by puromycin. Functionally, aminopeptidase. Required for the exit from meiosis, probably upstream of cyclin cyb-3. Involved in the establishment of the anterior-posterior polarity at the embryonic 1-cell stage by regulating the dynamics of sperm-donated centrosomes. Plays a role in oocyte maturation. Required for embryonic development. The sequence is that of Puromycin-sensitive aminopeptidase from Caenorhabditis elegans.